Here is an 839-residue protein sequence, read N- to C-terminus: MMSASRLAGTLIPAMAFLSCVRPESWEPCVEVVPNITYQCMELNFYKIPDNLPFSTKNLDLSFNPLRHLGSYSFFSFPELQVLDLSRCEIQTIEDGAYQSLSHLSTLILTGNPIQSLALGAFSGLSSLQKLVAVETNLASLENFPIGHLKTLKELNVAHNLIQSFKLPEYFSNLTNLEHLDLSSNKIQSIYCTDLRVLHQMPLLNLSLDLSLNPMNFIQPGAFKEIRLHKLTLRNNFDSLNVMKTCIQGLAGLEVHRLVLGEFRNEGNLEKFDKSALEGLCNLTIEEFRLAYLDYYLDDIIDLFNCLTNVSSFSLVSVTIERVKDFSYNFGWQHLELVNCKFGQFPTLKLKSLKRLTFTSNKGGNAFSEVDLPSLEFLDLSRNGLSFKGCCSQSDFGTTSLKYLDLSFNGVITMSSNFLGLEQLEHLDFQHSNLKQMSEFSVFLSLRNLIYLDISHTHTRVAFNGIFNGLSSLEVLKMAGNSFQENFLPDIFTELRNLTFLDLSQCQLEQLSPTAFNSLSSLQVLNMSHNNFFSLDTFPYKCLNSLQVLDYSLNHIMTSKKQELQHFPSSLAFLNLTQNDFACTCEHQSFLQWIKDQRQLLVEVERMECATPSDKQGMPVLSLNITCQMNKTIIGVSVLSVLVVSVVAVLVYKFYFHLMLLAGCIKYGRGENIYDAFVIYSSQDEDWVRNELVKNLEEGVPPFQLCLHYRDFIPGVAIAANIIHEGFHKSRKVIVVVSQHFIQSRWCIFEYEIAQTWQFLSSRAGIIFIVLQKVEKTLLRQQVELYRLLSRNTYLEWEDSVLGRHIFWRRLRKALLDGKSWNPEGTVGTGCNWQEATSI.

The N-terminal stretch at 1-23 (MMSASRLAGTLIPAMAFLSCVRP) is a signal peptide. The Extracellular portion of the chain corresponds to 24–631 (ESWEPCVEVV…SLNITCQMNK (608 aa)). Cysteine 29 and cysteine 40 are oxidised to a cystine. N-linked (GlcNAc...) asparagine glycosylation is present at asparagine 35. LRR repeat units follow at residues 55-76 (STKN…SFFS), 79-100 (ELQV…AYQS), 103-124 (HLST…AFSG), 127-148 (SLQK…PIGH), and 151-172 (TLKE…EYFS). N-linked (GlcNAc...) asparagine glycosylation occurs at asparagine 173. LRR repeat units lie at residues 176 to 199 (NLEH…RVLH), 205 to 225 (NLSL…AFKE), and 227 to 247 (RLHK…KTCI). An N-linked (GlcNAc...) asparagine glycan is attached at asparagine 205. Cysteine 281 and cysteine 306 are disulfide-bonded. 2 N-linked (GlcNAc...) asparagine glycosylation sites follow: asparagine 282 and asparagine 309. LRR repeat units lie at residues 331–351 (GWQH…LKLK), 352–373 (SLKR…VDLP), 374–394 (SLEF…CSQS), 400–422 (SLKY…LGLE), 423–444 (QLEH…SVFL), 448–456 (NLIYLDISH), 472–495 (SLEV…FTEL), 497–518 (NLTF…AFNS), 521–542 (SLQV…PYKC), and 545–565 (SLQV…QELQ). Cysteine 390 and cysteine 391 are joined by a disulfide. Asparagine 497 and asparagine 526 each carry an N-linked (GlcNAc...) asparagine glycan. Asparagine 575 carries N-linked (GlcNAc...) asparagine glycosylation. One can recognise an LRRCT domain in the interval 579–629 (NDFACTCEHQSFLQWIKDQRQLLVEVERMECATPSDKQGMPVLSLNITCQM). 2 disulfides stabilise this stretch: cysteine 583-cysteine 609 and cysteine 585-cysteine 627. Residues asparagine 624 and asparagine 630 are each glycosylated (N-linked (GlcNAc...) asparagine). A helical transmembrane segment spans residues 632 to 652 (TIIGVSVLSVLVVSVVAVLVY). Topologically, residues 653–839 (KFYFHLMLLA…GCNWQEATSI (187 aa)) are cytoplasmic. The region spanning 672 to 815 (NIYDAFVIYS…IFWRRLRKAL (144 aa)) is the TIR domain.

Belongs to the Toll-like receptor family. In terms of assembly, belongs to the lipopolysaccharide (LPS) receptor, a multi-protein complex containing at least CD14, LY96 and TLR4. Binding to bacterial LPS leads to homodimerization. Interacts with LY96 via the extracellular domain. Interacts with MYD88. Interacts (via TIR domains) with TIRAP. Interacts with TICAM2. Interacts with NOX4. Interacts with CNPY3. Interacts with HSP90B1. The interaction with both CNPY3 and HSP90B1 is required for proper folding in the endoplasmic reticulum. Interacts with MAP3K21; this interaction leads to negative regulation of TLR4 signaling. Interacts with CD36, following CD36 stimulation by oxLDL or amyloid-beta 42, and forms a heterodimer with TLR6. The trimeric complex is internalized and triggers inflammatory response. LYN kinase activity facilitates TLR4-TLR6 heterodimerization and signal initiation. Interacts with TICAM1 in response to LPS in a WDFY1-dependent manner. Interacts with WDFY1 in response to LPS. Interacts with SMPDL3B. Interacts with CEACAM1; upon lipopolysaccharide stimulation, forms a complex including TLR4 and the phosphorylated form of SYK and CEACAM1, which in turn, recruits PTPN6 that dephosphorylates SYK, reducing the production of reactive oxygen species (ROS) and lysosome disruption, which in turn, reduces the activity of the inflammasome. Interacts with RFTN1; the interaction occurs in response to lipopolysaccharide stimulation. Interacts with SCIMP; the interaction occurs in response to lipopolysaccharide stimulation and is enhanced by phosphorylation of SCIMP by LYN. This interaction facilitates the phosphorylation of TLR4 by LYN which elicits a selective cytokine response in macrophages. Interacts with TRAF3IP3. Interacts with TREM1; this interaction enhances TLR4-mediated inflammatory response. Interacts with ZG16B/PAUF. Interacts with CD82; this interaction inhibits TLR4-mediated signaling pathway. Interacts with neutrophil recruitment protein from Aedes aegypti saliva; the interaction probably promotes activation of canonical NF-kappa-B signaling in skin-resident macrophages and subsequent expression of neutrophil chemoattractants. As to quaternary structure, (Microbial infection) In case of infection, interacts with uropathogenic E.coli protein TcpC. (Microbial infection) In case of infection, interacts with B.melitensis protein TcpB; TcpB abolishes the TLR4-TIRAP interaction in vitro. In terms of assembly, (Microbial infection) Interacts with ebolavirus protein GP; this interaction leads to the production of proinflammatory cytokines and suppressor of cytokine signaling 1/SOCS1. In terms of processing, N-Glycosylation of Asn-526 and Asn-575 by STT3A-containing OST-A complex is necessary for the expression of TLR4 on the cell surface and the LPS-response. Likewise, mutants lacking two or more of the other N-glycosylation sites were deficient in interaction with LPS. Phosphorylated on tyrosine residues by LYN after binding lipopolysaccharide. Post-translationally, ubiquitinated by RNF128 via 'Lys-28'-linked polyubiquitin chains, leading to proteasomal degradation. In terms of tissue distribution, highly expressed in placenta, spleen and peripheral blood leukocytes. Detected in monocytes, macrophages, dendritic cells and several types of T-cells. Expressed in pancreatic cancer cells but not in normal pancreatic cells (at protein level).

Its subcellular location is the cell membrane. The protein resides in the early endosome. It is found in the cell projection. The protein localises to the ruffle. Functionally, transmembrane receptor that functions as a pattern recognition receptor recognizing pathogen- and damage-associated molecular patterns (PAMPs and DAMPs) to induce innate immune responses via downstream signaling pathways. At the plasma membrane, cooperates with LY96 to mediate the innate immune response to bacterial lipopolysaccharide (LPS). Also involved in LPS-independent inflammatory responses triggered by free fatty acids, such as palmitate, and Ni(2+). Mechanistically, acts via MYD88, TIRAP and TRAF6, leading to NF-kappa-B activation, cytokine secretion and the inflammatory response. Alternatively, CD14-mediated TLR4 internalization via endocytosis is associated with the initiation of a MYD88-independent signaling via the TICAM1-TBK1-IRF3 axis leading to type I interferon production. In addition to the secretion of proinflammatory cytokines, initiates the activation of NLRP3 inflammasome and formation of a positive feedback loop between autophagy and NF-kappa-B signaling cascade. In complex with TLR6, promotes inflammation in monocytes/macrophages by associating with TLR6 and the receptor CD86. Upon ligand binding, such as oxLDL or amyloid-beta 42, the TLR4:TLR6 complex is internalized and triggers inflammatory response, leading to NF-kappa-B-dependent production of CXCL1, CXCL2 and CCL9 cytokines, via MYD88 signaling pathway, and CCL5 cytokine, via TICAM1 signaling pathway. In myeloid dendritic cells, vesicular stomatitis virus glycoprotein G but not LPS promotes the activation of IRF7, leading to type I IFN production in a CD14-dependent manner. Required for the migration-promoting effects of ZG16B/PAUF on pancreatic cancer cells. This chain is Toll-like receptor 4 (TLR4), found in Homo sapiens (Human).